We begin with the raw amino-acid sequence, 118 residues long: Small ribosomal subunit protein uS13 (118 aa).

Positions 91–118 (HRRSLPLRGQRTKNNARTRKGPKKPIKR) are disordered.

Belongs to the universal ribosomal protein uS13 family. Part of the 30S ribosomal subunit. Forms a loose heterodimer with protein S19. Forms two bridges to the 50S subunit in the 70S ribosome.

In terms of biological role, located at the top of the head of the 30S subunit, it contacts several helices of the 16S rRNA. In the 70S ribosome it contacts the 23S rRNA (bridge B1a) and protein L5 of the 50S subunit (bridge B1b), connecting the 2 subunits; these bridges are implicated in subunit movement. Contacts the tRNAs in the A and P-sites. The protein is Small ribosomal subunit protein uS13 of Hydrogenovibrio crunogenus (strain DSM 25203 / XCL-2) (Thiomicrospira crunogena).